A 247-amino-acid chain; its full sequence is 2-amino-5-formylamino-6-ribosylaminopyrimidin-4(3H)-one 5'-monophosphate deformylase (247 aa).

Fe cation contacts are provided by Glu-41, His-43, Asp-52, and His-121.

It belongs to the creatininase superfamily. FAPy deformylase family. As to quaternary structure, homodimer. Requires Fe(2+) as cofactor. Zn(2+) serves as cofactor.

It carries out the reaction 2-amino-5-formylamino-6-(5-phospho-D-ribosylamino)pyrimidin-4(3H)-one + H2O = 2,5-diamino-6-(1-D-ribosylamino)pyrimidin-4(3H)-one 5'-phosphate + formate + H(+). The protein operates within cofactor biosynthesis; coenzyme F420 biosynthesis. Its pathway is cofactor biosynthesis; riboflavin biosynthesis. In terms of biological role, catalyzes the hydrolysis of the formamide of 2-amino-5-formylamino-6-ribosylamino-4(3H)-pyrimidinone 5'-monophosphate (FAPy) to form 2,5-diamino-6-ribosylamino-4(3H)-pyrimidinone 5'-phosphate (APy). In Methanothermus fervidus (strain ATCC 43054 / DSM 2088 / JCM 10308 / V24 S), this protein is 2-amino-5-formylamino-6-ribosylaminopyrimidin-4(3H)-one 5'-monophosphate deformylase.